The sequence spans 360 residues: Phospho-N-acetylmuramoyl-pentapeptide-transferase (360 aa).

A run of 10 helical transmembrane segments spans residues 26 to 46 (AIVSLLTALFISLWMGPRMIA), 72 to 92 (PTMGGIMILTSITVSVLLWAY), 94 to 114 (SNPYVWCVLFVLVGYGIVGFV), 132 to 152 (WKYFWQSAIALVVAFVMYMIG), 168 to 188 (VMPQLGLLYLLLAYFVIVGTS), 199 to 219 (GLAIMPTVFVAAGFALVAWAT), 236 to 256 (AGELVIVCTAIVGAGLGFLWF), 263 to 283 (VFMGDVGSLALGGALGTIAVL), 288 to 308 (FLLVIMGGVFVVETLSVILQV), and 338 to 358 (VIVRFWIISLMLVLIGLATLK).

It belongs to the glycosyltransferase 4 family. MraY subfamily. The cofactor is Mg(2+).

Its subcellular location is the cell inner membrane. It catalyses the reaction UDP-N-acetyl-alpha-D-muramoyl-L-alanyl-gamma-D-glutamyl-meso-2,6-diaminopimeloyl-D-alanyl-D-alanine + di-trans,octa-cis-undecaprenyl phosphate = di-trans,octa-cis-undecaprenyl diphospho-N-acetyl-alpha-D-muramoyl-L-alanyl-D-glutamyl-meso-2,6-diaminopimeloyl-D-alanyl-D-alanine + UMP. The protein operates within cell wall biogenesis; peptidoglycan biosynthesis. Functionally, catalyzes the initial step of the lipid cycle reactions in the biosynthesis of the cell wall peptidoglycan: transfers peptidoglycan precursor phospho-MurNAc-pentapeptide from UDP-MurNAc-pentapeptide onto the lipid carrier undecaprenyl phosphate, yielding undecaprenyl-pyrophosphoryl-MurNAc-pentapeptide, known as lipid I. The polypeptide is Phospho-N-acetylmuramoyl-pentapeptide-transferase (Erwinia tasmaniensis (strain DSM 17950 / CFBP 7177 / CIP 109463 / NCPPB 4357 / Et1/99)).